A 413-amino-acid chain; its full sequence is Hemolin (413 aa).

The N-terminal stretch at 1–18 (MVSKSIVALAACVAMCVA) is a signal peptide. 4 consecutive Ig-like C2-type domains span residues 25-112 (PVLK…HIIS), 121-215 (PTTF…LVGY), 233-322 (PMYV…VKLT), and 327-411 (PRFT…TLVI). 4 cysteine pairs are disulfide-bonded: Cys-46–Cys-97, Cys-141–Cys-199, Cys-252–Cys-305, and Cys-349–Cys-395. Residue Asn-283 is glycosylated (N-linked (GlcNAc...) asparagine).

Belongs to the hemolin family. Hemolymph.

It is found in the secreted. Functionally, insect-immune protein with antimicrobial activity. Forms a protein complex at the bacterial surface. Can inhibit hemocyte aggregation. This is Hemolin from Manduca sexta (Tobacco hawkmoth).